Consider the following 482-residue polypeptide: UDP-N-acetylmuramoyl-L-alanyl-D-glutamate--2,6-diaminopimelate ligase (482 aa).

Serine 30 contributes to the UDP-N-acetyl-alpha-D-muramoyl-L-alanyl-D-glutamate binding site. Residue 111–117 (GTNGKTT) coordinates ATP. UDP-N-acetyl-alpha-D-muramoyl-L-alanyl-D-glutamate is bound by residues 153–154 (TT), serine 180, glutamine 186, and arginine 188. Lysine 220 is subject to N6-carboxylysine. Residues arginine 378, 402-405 (DNPR), glycine 455, and glutamate 459 contribute to the meso-2,6-diaminopimelate site. The short motif at 402-405 (DNPR) is the Meso-diaminopimelate recognition motif element.

It belongs to the MurCDEF family. MurE subfamily. It depends on Mg(2+) as a cofactor. In terms of processing, carboxylation is probably crucial for Mg(2+) binding and, consequently, for the gamma-phosphate positioning of ATP.

The protein resides in the cytoplasm. The enzyme catalyses UDP-N-acetyl-alpha-D-muramoyl-L-alanyl-D-glutamate + meso-2,6-diaminopimelate + ATP = UDP-N-acetyl-alpha-D-muramoyl-L-alanyl-gamma-D-glutamyl-meso-2,6-diaminopimelate + ADP + phosphate + H(+). Its pathway is cell wall biogenesis; peptidoglycan biosynthesis. Catalyzes the addition of meso-diaminopimelic acid to the nucleotide precursor UDP-N-acetylmuramoyl-L-alanyl-D-glutamate (UMAG) in the biosynthesis of bacterial cell-wall peptidoglycan. The chain is UDP-N-acetylmuramoyl-L-alanyl-D-glutamate--2,6-diaminopimelate ligase from Bacteroides thetaiotaomicron (strain ATCC 29148 / DSM 2079 / JCM 5827 / CCUG 10774 / NCTC 10582 / VPI-5482 / E50).